We begin with the raw amino-acid sequence, 539 residues long: MATSAPLRSLEEEVTCSICLDYLRDPVTIDCGHVFCRSCTTDVRPISGSRPVCPLCKKPFKKENIRPVWQLASLVENIERLKVDKGRQPGEVTREQQDAKLCERHREKLHYYCEDDGKLLCVMCRESREHRPHTAVLMEKAAQPHREKILNHLSTLRRDRDKIQGFQAKGEADILAALKKLQDQRQYIVAEFEQGHQFLREREEHLLEQLAKLEQELTEGREKFKSRGVGELARLALVISELEGKAQQPAAELMQDTRDFLNRYPRKKFWVGKPIARVVKKKTGEFSDKLLSLQRGLREFQGKLLRDLEYKTVSVTLDPQSASGYLQLSEDWKCVTYTSLYKSAYLHPQQFDCEPGVLGSKGFTWGKVYWEVEVEREGWSEDEEEGDEEEEGEEEEEEEEAGYGDGYDDWETDEDEESLGDEEEEEEEEEEEVLESCMVGVARDSMKRKGDLSLRPEDGVWALRLSSSGIWANTSPEAELFPALRPRRVGIALDYEGGTVTFTNAESQELIYTFTATFTRRLVPFLWLKWPGTRLLLRP.

The RING-type zinc-finger motif lies at 16–57; it reads CSICLDYLRDPVTIDCGHVFCRSCTTDVRPISGSRPVCPLCK. The B box-type zinc finger occupies 97 to 138; it reads QDAKLCERHREKLHYYCEDDGKLLCVMCRESREHRPHTAVLM. The Zn(2+) site is built by Cys102, His105, Cys124, and His130. A coiled-coil region spans residues 188-227; it reads IVAEFEQGHQFLREREEHLLEQLAKLEQELTEGREKFKSR. Residues 295–539 form the B30.2/SPRY domain; it reads RGLREFQGKL…WPGTRLLLRP (245 aa). A disordered region spans residues 376 to 437; sequence REGWSEDEEE…EEEEEVLESC (62 aa). The span at 380-434 shows a compositional bias: acidic residues; that stretch reads SEDEEEGDEEEEGEEEEEEEEAGYGDGYDDWETDEDEESLGDEEEEEEEEEEEVL.

It belongs to the TRIM/RBCC family. As to quaternary structure, interacts with TBK1; this interaction bridges together TBK1 and NEMO in order to activate TBK1. Interacts with INCA1. Post-translationally, autoubiquitinates upon viral infection. In turn, autoubiquitinated TRIM26 recruits NEMO and bridges TBK1-NEMO interaction.

It localises to the cytoplasm. The protein resides in the nucleus. It catalyses the reaction S-ubiquitinyl-[E2 ubiquitin-conjugating enzyme]-L-cysteine + [acceptor protein]-L-lysine = [E2 ubiquitin-conjugating enzyme]-L-cysteine + N(6)-ubiquitinyl-[acceptor protein]-L-lysine.. In terms of biological role, E3 ubiquitin-protein ligase which regulates the IFN-beta production and antiviral response downstream of various DNA-encoded pattern-recognition receptors (PRRs). Also plays a central role in determining the response to different forms of oxidative stress by controlling levels of DNA glycosylases NEIL1, NEIL3 and NTH1 that are involved in repair of damaged DNA. Promotes nuclear IRF3 ubiquitination and proteasomal degradation. Bridges together TBK1 and NEMO during the innate response to viral infection leading to the activation of TBK1. Positively regulates LPS-mediated inflammatory innate immune response by catalyzing the 'Lys-11'-linked polyubiquitination of TAB1 to enhance its activation and subsequent NF-kappa-B and MAPK signaling. In a manner independent of its catalytic activity, inhibits WWP2, a SOX2-directed E3 ubiquitin ligase, and thus protects SOX2 from polyubiquitination and proteasomal degradation. Ubiquitinates the histone acetyltransferase protein complex component PHF20 and thereby triggers its degradation in the nucleus after its recruitment by the histone demethylase KDM6B, serving as a scaffold protein. Upon induction by TGF-beta, ubiquitinates the TFIID component TAF7 for proteasomal degradation. Induces ferroptosis by ubiquitinating SLC7A11, a critical protein for lipid reactive oxygen species (ROS) scavenging. In Pan troglodytes (Chimpanzee), this protein is Tripartite motif-containing protein 26 (TRIM26).